The following is a 1251-amino-acid chain: MSERTKWTDEQWEAITGNEKSLLVSAAAGAGKTAVLVERIIRKITDEENPVDIDRLLVVTFTNAAATEMRERIAQAISEKLEENPGSANIQRQLTLLGKACITTIHSFCLEVIRSNFQQINIDPGFRIADETESRLMKLEALDEVFEEQYENENEDFFELLECYGGNRDDRALQDMVLNLYDFIQSSPWPEEWLEKMTESMNIPDGTDFGKTLWGSVLLSSVKIELEGLKEMISRALEILKDASGLEKYRAVYMEDLANVDALLKLLNEESEMQWDRIFNALQGFEFATLPRCGREVDKDKQEIVKKIRDDVKQRIRKFREKVITSVSNEIISDLKALYPKMKCLANLVKQLAEKYAEKKNRKSVVDFNDLEHFCLEILTERKEDGSIIPSRTAISYRERFAEILVDEYQDSNLVQETIINMISKGDDASPGVFMVGDVKQSIYRFRQARPELFLEKYNTYLPDKGSPCRKIILSRNFRSRREVIDAVNFLFKQIMSTGAGELDYTDAEALNFGAVFDENAKEDITVGGEVEFHLIQTEDEDKNFTFENEGEEGRQADEGEEDEEMLDSIQCEARLVGRRILELMKPDENGRYFSVFDKAKNEYRRVEYRDVVILLRTTRNWAEVFVDELSVMGIPVFADTGTGFFKTVEVQVMLSLLQIIDNPLQDIPLLSVLRSPIVGFTTDELAELRLVDKKALLFDALKKLAESGQGEAAGKASAFLENLQKWREMSLYMSTDRLLWQLYNDTGYYSIVGAMPAGEQRQANLRILYERARQFEETSYKGLFNFINFIDKLKSSRGDMGSAKILSENDNVVRIMSIHKSKGLEFPVVIVAGCGKKFNLQDMNKSILLHHELGFGPDVVDHKLRLSWPSVAKQAIREKIKAETLSEEMRILYVALTRAREKLVITGAVKNVRKAVEKWLDSASVQKSRLSAYDMLSGANYLDWIGPALLRHKNCGGLRDCVGSAGFRGLLIDDPSVWSVKIWNKTDVQSSGVSEEQGESEFIKWLDSLEKEEPSEYAEETARRLSWSYPYVKASKVPAKVSVTELKRRYNEVVSEDVMQFPDYMPVLVKKPMFLEEKKGLTYAEKGTILHFVMQHLDYGREDIEAQIEEMVAKDLLTPQQAQSVDAARIRRFLNSPLGKRMLASKSINREVPFNIEIPCHELYRDMEDEACHGETLLLQGVVDCYFEEPDGIVLVDYKTDYVAPGNVETIRERYKVQILYYARALEMLTGKKVKEKYIYLFWDGRILGF.

The UvrD-like helicase ATP-binding domain maps to 5–481 (TKWTDEQWEA…IILSRNFRSR (477 aa)). 26 to 33 (AAAGAGKT) serves as a coordination point for ATP. In terms of domain architecture, UvrD-like helicase C-terminal spans 526 to 824 (TVGGEVEFHL…RIMSIHKSKG (299 aa)). The segment at 544 to 565 (NFTFENEGEEGRQADEGEEDEE) is disordered.

This sequence belongs to the helicase family. AddA subfamily. As to quaternary structure, heterodimer of AddA and AddB/RexB. Mg(2+) is required as a cofactor.

The enzyme catalyses Couples ATP hydrolysis with the unwinding of duplex DNA by translocating in the 3'-5' direction.. It catalyses the reaction ATP + H2O = ADP + phosphate + H(+). Functionally, the heterodimer acts as both an ATP-dependent DNA helicase and an ATP-dependent, dual-direction single-stranded exonuclease. Recognizes the chi site generating a DNA molecule suitable for the initiation of homologous recombination. The AddA nuclease domain is required for chi fragment generation; this subunit has the helicase and 3' -&gt; 5' nuclease activities. This is ATP-dependent helicase/nuclease subunit A from Acetivibrio thermocellus (strain ATCC 27405 / DSM 1237 / JCM 9322 / NBRC 103400 / NCIMB 10682 / NRRL B-4536 / VPI 7372) (Clostridium thermocellum).